A 492-amino-acid chain; its full sequence is Catalase isozyme 2 (492 aa).

Catalysis depends on residues histidine 65 and asparagine 138. Tyrosine 348 is a binding site for heme.

Belongs to the catalase family. In terms of assembly, homotetramer. The cofactor is heme.

The protein localises to the peroxisome. The catalysed reaction is 2 H2O2 = O2 + 2 H2O. Its function is as follows. Occurs in almost all aerobically respiring organisms and serves to protect cells from the toxic effects of hydrogen peroxide. The sequence is that of Catalase isozyme 2 (CAT2) from Gossypium hirsutum (Upland cotton).